A 380-amino-acid chain; its full sequence is MEEGGDFDNYYGADNQSECEYTDWKSSGALIPAIYMLVFLLGTTGNGLVLWTVFRSSREKRRSADIFIASLAVADLTFVVTLPLWATYTYRDYDWPFGTFFCKLSSYLIFVNMYASVFCLTGLSFDRYLAIVRPVANARLRLRVSGAVATAVLWVLAALLAMPVMVLRTTGDLENTTKVQCYMDYSMVATVSSEWAWEVGLGVSSTTVGFVVPFTIMLTCYFFIAQTIAGHFRKERIEGLRKRRRLLSIIVVLVVTFALCWMPYHLVKTLYMLGSLLHWPCDFDLFLMNIFPYCTCISYVNSCLNPFLYAFFDPRFRQACTSMLCCGQSRCAGTSHSSSGEKSASYSSGHSQGPGPNMGKGGEQMHEKSIPYSQETLVVD.

Over 1–30 (MEEGGDFDNYYGADNQSECEYTDWKSSGAL) the chain is Extracellular. Asn15 carries N-linked (GlcNAc...) asparagine glycosylation. Cystine bridges form between Cys19–Cys281 and Cys102–Cys181. A helical transmembrane segment spans residues 31–54 (IPAIYMLVFLLGTTGNGLVLWTVF). The Cytoplasmic segment spans residues 55–64 (RSSREKRRSA). The chain crosses the membrane as a helical span at residues 65 to 86 (DIFIASLAVADLTFVVTLPLWA). Residues 87–99 (TYTYRDYDWPFGT) are Extracellular-facing. Residues 100-125 (FFCKLSSYLIFVNMYASVFCLTGLSF) form a helical membrane-spanning segment. The Cytoplasmic portion of the chain corresponds to 126-146 (DRYLAIVRPVANARLRLRVSG). Residues 147 to 164 (AVATAVLWVLAALLAMPV) traverse the membrane as a helical segment. Residues 165–198 (MVLRTTGDLENTTKVQCYMDYSMVATVSSEWAWE) lie on the Extracellular side of the membrane. Residue Asn175 is glycosylated (N-linked (GlcNAc...) asparagine). A helical membrane pass occupies residues 199–223 (VGLGVSSTTVGFVVPFTIMLTCYFF). Residues 224-246 (IAQTIAGHFRKERIEGLRKRRRL) are Cytoplasmic-facing. A helical membrane pass occupies residues 247-270 (LSIIVVLVVTFALCWMPYHLVKTL). Over 271-289 (YMLGSLLHWPCDFDLFLMN) the chain is Extracellular. The chain crosses the membrane as a helical span at residues 290-312 (IFPYCTCISYVNSCLNPFLYAFF). Residues 313 to 380 (DPRFRQACTS…PYSQETLVVD (68 aa)) are Cytoplasmic-facing. The span at 342–351 (KSASYSSGHS) shows a compositional bias: low complexity. Residues 342–380 (KSASYSSGHSQGPGPNMGKGGEQMHEKSIPYSQETLVVD) form a disordered region. A compositionally biased stretch (polar residues) spans 371–380 (PYSQETLVVD).

Belongs to the G-protein coupled receptor 1 family. Homodimer; dimerization inhibits APLNR-mediated G protein and beta-arrestin signaling pathways compared to monomeric APLNR. In terms of tissue distribution, expressed in heart, brain, kidney, stomach, spleen, thymus, lung, ovary, small intestine and colon, adipose tissues and pancreas. Expressed in glial cells, astrocytes and neuronal subpopulations. Expressed in embryonic (ESCs) and induced (iPSCs) pluripotent stem cells.

The protein resides in the cell membrane. In terms of biological role, g protein-coupled receptor for peptide hormones apelin (APLN) and apelin receptor early endogenous ligand (APELA/ELA), that plays a role in the regulation of normal cardiovascular function and fluid homeostasis. When acting as apelin receptor, activates both G(i) protein pathway that inhibits adenylate cyclase activity, and the beta-arrestin pathway that promotes internalization of the receptor. APLNR/APJ also functions as mechanoreceptor that is activated by pathological stimuli in a G-protein-independent fashion to induce beta-arrestin signaling, hence eliciting cardiac hypertrophy. However, the presence of apelin ligand blunts cardiac hypertrophic induction from APLNR/APJ on response to pathological stimuli. Plays a key role in early development such as gastrulation, blood vessels formation and heart morphogenesis by acting as a APELA receptor. May promote angioblast migration toward the embryonic midline, i.e. the position of the future vessel formation, during vasculogenesis. Promotes sinus venosus (SV)-derived endothelial cells migration into the developing heart to promote coronary blood vessel development. Also plays a role in various processes in adults such as regulation of blood vessel formation, blood pressure, heart contractility and heart failure. (Microbial infection) Alternative coreceptor with CD4 for HIV-1 infection; may be involved in the development of AIDS dementia. This Homo sapiens (Human) protein is Apelin receptor.